Consider the following 367-residue polypeptide: Heme A synthase (367 aa).

5 helical membrane passes run 26-46 (IRGWLAVVLFALFALVIVGGA), 111-131 (LLARSIGVIFALPLLFFWLTG), 139-159 (LPLLGILALGGFQGFIGWWMV), 174-194 (LATHLVIACLIFAACMWIYRG), and 212-232 (AGIIAAMSLFQIYLGALVAGL). Heme is bound at residue His-274. 3 helical membrane-spanning segments follow: residues 276–296 (AGAYLLFALAFAHMVVSLRAA), 305–325 (SVLLFVLLTVQAAIGITTLLL), and 327–347 (VPIVWGVLHQAGALVVLGFAI). His-335 contacts heme.

Belongs to the COX15/CtaA family. Type 2 subfamily. As to quaternary structure, interacts with CtaB. Heme b serves as cofactor.

It localises to the cell membrane. It carries out the reaction Fe(II)-heme o + 2 A + H2O = Fe(II)-heme a + 2 AH2. It participates in porphyrin-containing compound metabolism; heme A biosynthesis; heme A from heme O: step 1/1. Its function is as follows. Catalyzes the conversion of heme O to heme A by two successive hydroxylations of the methyl group at C8. The first hydroxylation forms heme I, the second hydroxylation results in an unstable dihydroxymethyl group, which spontaneously dehydrates, resulting in the formyl group of heme A. The polypeptide is Heme A synthase (Sinorhizobium fredii (strain NBRC 101917 / NGR234)).